Reading from the N-terminus, the 525-residue chain is GMP synthase [glutamine-hydrolyzing] (525 aa).

Residues 9 to 207 (RILILDFGSQ…VLDICQCEAL (199 aa)) form the Glutamine amidotransferase type-1 domain. Cys86 serves as the catalytic Nucleophile. Residues His181 and Glu183 contribute to the active site. The GMPS ATP-PPase domain maps to 208 to 400 (WTPAKIIDDA…LGLPYNMLYR (193 aa)). 235–241 (SGGVDSS) is a binding site for ATP.

As to quaternary structure, homodimer.

It catalyses the reaction XMP + L-glutamine + ATP + H2O = GMP + L-glutamate + AMP + diphosphate + 2 H(+). It participates in purine metabolism; GMP biosynthesis; GMP from XMP (L-Gln route): step 1/1. In terms of biological role, catalyzes the synthesis of GMP from XMP. This chain is GMP synthase [glutamine-hydrolyzing], found in Pectobacterium atrosepticum (strain SCRI 1043 / ATCC BAA-672) (Erwinia carotovora subsp. atroseptica).